A 378-amino-acid chain; its full sequence is Galanin receptor 2b (378 aa).

Residues 1-30 are Extracellular-facing; the sequence is MSDHEDLNKAMGHWNASESYQLNPASVIVS. The helical transmembrane segment at 31 to 51 threads the bilayer; the sequence is VVFSLIFLLGTIGNSLVLAVL. At 52 to 62 the chain is on the cytoplasmic side; that stretch reads LRSGQVGYNTT. A helical membrane pass occupies residues 63-83; it reads NLFILNLSVADFFFIIFCVPF. Residues 84–101 are Extracellular-facing; it reads QATIYSLEGWVFGSFMCK. The cysteines at positions 100 and 177 are disulfide-linked. A helical membrane pass occupies residues 102–123; the sequence is VVHFFINLTMYASSFTLAAVSV. Over 124–143 the chain is Cytoplasmic; the sequence is DRYLAIRYPLRSRELRTPCN. A helical transmembrane segment spans residues 144 to 164; the sequence is AVVAMVVIWGLSLVFAGPYLS. Residues 165-187 are Extracellular-facing; the sequence is YYDLIDFENSNVCVPGWEEHNRK. A helical transmembrane segment spans residues 188-208; that stretch reads VLDTCTFVFGYVIPVLIVSLS. Residues 209–238 are Cytoplasmic-facing; sequence YTRTIKYLWTAVDPLDGMSESKRAKRKVTK. Residues 239-259 form a helical membrane-spanning segment; it reads MIIIVTVLFCICWLPYHVVIL. At 260-276 the chain is on the extracellular side; it reads CYLYGDFPFNQTTYAFR. A helical transmembrane segment spans residues 277 to 297; the sequence is LLSHCMAYANSCLNPIVYALV. The Cytoplasmic segment spans residues 298–378; it reads SKHFRKGFKK…TITLPFQNQP (81 aa). The tract at residues 339–362 is disordered; sequence EVSQMNEENARQNESEMVNRPLAQ.

This sequence belongs to the G-protein coupled receptor 1 family. In terms of tissue distribution, expressed in neurons in the ventral area of the interpeduncular nucleus (IPN) where expression often overlaps with spx1.

Its subcellular location is the membrane. Receptor for the hormone galanin. Receptor for the hormones spexin-1 and spexin-2. In Danio rerio (Zebrafish), this protein is Galanin receptor 2b.